The sequence spans 467 residues: Dihydrolipoyl dehydrogenase (467 aa).

FAD contacts are provided by residues 33–41, Lys50, and Gly113; that span reads EPKYWGGIC. Cysteines 41 and 46 form a disulfide. Residues 181-185, Glu204, and 269-272 contribute to the NAD(+) site; these read GAGAI and AIGF. FAD-binding residues include Asp312 and Ala320. His446 serves as the catalytic Proton acceptor.

The protein belongs to the class-I pyridine nucleotide-disulfide oxidoreductase family. In terms of assembly, homodimer. Part of the PDH complex, consisting of multiple copies of AceE (E1), DlaT (E2) and Lpd (E3), and of the BCKADH complex, consisting of multiple copies of BkdA/BkdB (E1), BkdC (E2) and Lpd (E3). Requires FAD as cofactor.

It localises to the cytoplasm. It carries out the reaction N(6)-[(R)-dihydrolipoyl]-L-lysyl-[protein] + NAD(+) = N(6)-[(R)-lipoyl]-L-lysyl-[protein] + NADH + H(+). Lipoamide dehydrogenase is a component of the alpha-ketoacid dehydrogenase complexes. Catalyzes the reoxidation of dihydrolipoyl groups which are covalently attached to the lipoate acyltransferase components (E2) of the complexes. In Mycobacterium leprae (strain TN), this protein is Dihydrolipoyl dehydrogenase (lpd).